Here is a 255-residue protein sequence, read N- to C-terminus: tRNA (guanine-N(1)-)-methyltransferase (255 aa).

S-adenosyl-L-methionine contacts are provided by residues Gly117 and 137–142; that span reads IGDYVL.

It belongs to the RNA methyltransferase TrmD family. Homodimer.

It is found in the cytoplasm. It carries out the reaction guanosine(37) in tRNA + S-adenosyl-L-methionine = N(1)-methylguanosine(37) in tRNA + S-adenosyl-L-homocysteine + H(+). Functionally, specifically methylates guanosine-37 in various tRNAs. This Glaesserella parasuis serovar 5 (strain SH0165) (Haemophilus parasuis) protein is tRNA (guanine-N(1)-)-methyltransferase.